Reading from the N-terminus, the 200-residue chain is MAHPFTLLVTVGSTLFPSLTSHVLLPTFLSLLQSLGVQRLVVQYGRAELKLQDDVKQTLNIDSQGDGIGVWSDNDGDRVRDEKQNGMVVEVMRFTNDFEGLVGKSDAVISHAGSGSILTVLRRAPPIPLLVVPNRSLMDDHQSELADALYKDGYVMVASVEDLEEKVQPFLKIWPSQAKLFPETRKEVFREVVDDLMGYD.

This sequence belongs to the glycosyltransferase 28 family. As to quaternary structure, heterodimer with ALG14 to form a functional enzyme.

The protein resides in the endoplasmic reticulum. It carries out the reaction an N-acetyl-alpha-D-glucosaminyl-diphospho-di-trans,poly-cis-dolichol + UDP-N-acetyl-alpha-D-glucosamine = an N,N'-diacetylchitobiosyl-diphospho-di-trans,poly-cis-dolichol + UDP + H(+). Its function is as follows. Involved in protein N-glycosylation. Essential for the second step of the dolichol-linked oligosaccharide pathway. This Cryptococcus neoformans var. neoformans serotype D (strain B-3501A) (Filobasidiella neoformans) protein is UDP-N-acetylglucosamine transferase subunit ALG13 (ALG13).